The sequence spans 226 residues: Uracil-DNA glycosylase (226 aa).

The active-site Proton acceptor is D64.

The protein belongs to the uracil-DNA glycosylase (UDG) superfamily. UNG family.

The protein resides in the cytoplasm. It catalyses the reaction Hydrolyzes single-stranded DNA or mismatched double-stranded DNA and polynucleotides, releasing free uracil.. Functionally, excises uracil residues from the DNA which can arise as a result of misincorporation of dUMP residues by DNA polymerase or due to deamination of cytosine. This chain is Uracil-DNA glycosylase, found in Vibrio campbellii (strain ATCC BAA-1116).